The following is a 268-amino-acid chain: uncharacterized protein (268 aa).

The signal sequence occupies residues 1 to 18 (MRGFLLLSLGVFSFSALA). 2 domain regions span residues 24–184 (SHDL…ELLP) and 185–268 (SPAT…NWLR). Cysteines 110 and 115 form a disulfide.

Monomer.

The protein resides in the periplasm. This is an uncharacterized protein from Pseudomonas aeruginosa (strain ATCC 15692 / DSM 22644 / CIP 104116 / JCM 14847 / LMG 12228 / 1C / PRS 101 / PAO1).